The chain runs to 194 residues: FMN-dependent NADH:quinone oxidoreductase (194 aa).

FMN-binding positions include S10 and 90–93; that span reads MYNL.

Belongs to the azoreductase type 1 family. In terms of assembly, homodimer. Requires FMN as cofactor.

The enzyme catalyses 2 a quinone + NADH + H(+) = 2 a 1,4-benzosemiquinone + NAD(+). The catalysed reaction is N,N-dimethyl-1,4-phenylenediamine + anthranilate + 2 NAD(+) = 2-(4-dimethylaminophenyl)diazenylbenzoate + 2 NADH + 2 H(+). Its function is as follows. Quinone reductase that provides resistance to thiol-specific stress caused by electrophilic quinones. Also exhibits azoreductase activity. Catalyzes the reductive cleavage of the azo bond in aromatic azo compounds to the corresponding amines. The protein is FMN-dependent NADH:quinone oxidoreductase of Haemophilus influenzae (strain 86-028NP).